Consider the following 160-residue polypeptide: Transcriptional regulator MraZ (160 aa).

SpoVT-AbrB domains are found at residues 5–50 (KFDT…GDQV) and 93–136 (AVEC…SQAV).

It belongs to the MraZ family. Forms oligomers.

Its subcellular location is the cytoplasm. It localises to the nucleoid. The chain is Transcriptional regulator MraZ from Geobacter sp. (strain M21).